The chain runs to 607 residues: Albumin (607 aa).

Residues 1-18 (MKWVTFVSLLFLFSSAYF) form the signal peptide. Residues 19-24 (RGVLRR) constitute a propeptide that is removed on maturation. Albumin domains are found at residues 19–209 (RGVL…DALK), 210–402 (ERIL…QFTP), and 403–600 (LVEE…KLVA). Histidine 27 is a binding site for Cu cation. A Phosphoserine modification is found at serine 29. Glutamate 30 and aspartate 37 together coordinate Ca(2+). Cysteine 77 and cysteine 86 form a disulfide bridge. 2 positions are modified to phosphoserine: serine 82 and serine 89. Histidine 91 serves as a coordination point for Zn(2+). Intrachain disulfides connect cysteine 99–cysteine 115, cysteine 114–cysteine 125, cysteine 147–cysteine 192, cysteine 191–cysteine 200, cysteine 223–cysteine 269, and cysteine 268–cysteine 276. A Phosphothreonine modification is found at threonine 107. Lysine 228 is subject to N6-succinyllysine. Glutamate 267 contributes to the Ca(2+) binding site. The Zn(2+) site is built by histidine 270 and aspartate 272. 4 residues coordinate Ca(2+): aspartate 272, glutamate 275, aspartate 278, and aspartate 282. 8 disulfide bridges follow: cysteine 288–cysteine 302, cysteine 301–cysteine 312, cysteine 339–cysteine 384, cysteine 383–cysteine 392, cysteine 415–cysteine 461, cysteine 460–cysteine 471, cysteine 484–cysteine 500, and cysteine 499–cysteine 510. Serine 442 is modified (phosphoserine). Threonine 443 and threonine 445 each carry phosphothreonine. Serine 512 is subject to Phosphoserine. 2 cysteine pairs are disulfide-bonded: cysteine 537–cysteine 582 and cysteine 581–cysteine 590. Lysine 557 bears the N6-methyllysine mark. Threonine 569 carries the phosphothreonine modification. Lysine 587 carries the N6-succinyllysine modification.

Belongs to the ALB/AFP/VDB family. Interacts with FCGRT; this interaction regulates ALB homeostasis. Interacts with TASOR. In plasma, occurs in a covalently-linked complex with chromophore-bound alpha-1-microglobulin; this interaction does not prevent fatty acid binding to ALB. In terms of processing, phosphorylated by FAM20C in the extracellular medium. Plasma.

It is found in the secreted. Binds water, Ca(2+), Na(+), K(+), fatty acids, hormones, bilirubin and drugs. Its main function is the regulation of the colloidal osmotic pressure of blood. Major zinc transporter in plasma, typically binds about 80% of all plasma zinc. Major calcium and magnesium transporter in plasma, binds approximately 45% of circulating calcium and magnesium in plasma. Potentially has more than two calcium-binding sites and might additionally bind calcium in a non-specific manner. The shared binding site between zinc and calcium at residue Asp-272 suggests a crosstalk between zinc and calcium transport in the blood. The rank order of affinity is zinc &gt; calcium &gt; magnesium. Binds to the bacterial siderophore enterobactin and inhibits enterobactin-mediated iron uptake of E.coli from ferric transferrin, and may thereby limit the utilization of iron and growth of enteric bacteria such as E.coli. Does not prevent iron uptake by the bacterial siderophore aerobactin. This is Albumin (ALB) from Equus asinus (Donkey).